Reading from the N-terminus, the 970-residue chain is MNSLPPRPSLDVLPEALRPDLIRLLDDFESACARDGIALDHWPEALVRVWAGSGFAARIAIRRPNLLLELIQDGTLARPLEAGEMAARVSAVVQAAQDEAALMRDLRLLRQREMMRIAWRDLSGEAGLDETLGDLTDLAEHCIDQAAAWVHGQLVQRHGEPRDAEGRPQRLVVLGMGKLGGRELNFSSDVDLIFTYAARGETDGEKPLDNQQFFIRLGQRLIRLLDENTAEGFVFRVDMRLRPFGDAGPLVMDFDTLEGYYESHGREWERYALIKARVVAGDREAGRELMRALRPFVFRRYLDYGAFAALRDMKAMINREAARRSRGDDVKLGEGGIREVEFIGQAFQLIRAGRDPRLQLRGIRPVLRRLAEMELMPGYVVDQLITAYEFLRRTENHLQMAQDQQTHRLPESDEARLRLAFSMGHDDWEGFSRELARHRRRVQEHFQQVFAAPQGEAEEAAGAEGPGQAVLASIWAGDRSGERAQAVLAEAGFRDAPKALEWIEDLREGAACRSLTATGRERLDQLMPLLLGAAAGAEDPDTVLSRLVTLVRSIARRSVYLSLLVESPMALSQLVKLCDASPWIAQLLTRHPLLLDELLDPRSLYAPMDREGLSAELDEELSQVPEDDMEQMMDRLRQFQQVQMLKVAAADIMGVLPLMKVSDHLTWIAEVVLERVLSLVMAQLHARYGRPRCLIDGRPYEPGFAIIGYGKLGGLELGYGSDLDIVFLHDSAGEQQMTDGDKALDNSEFFARLGQRIVHVLGTYTGAGRLYEVDTRLRPSGASGLLVSSLKAFELYQETKAWTWEHQALVRARPVAGDAHIAEGFAEIRRRVLGICRDREKLRQEVREMREKMWSEHASRDPSRFNLKRDPGGIADIEFMVQYWVLAYACDHPPLLDYPDNIRILERLVVTGVLPEEDARFLTDTYREFRNRIHRLTLQESDAVVDAAEFAEQRETVRALWRRVMEEGKA.

An adenylyl removase region spans residues 1–454 (MNSLPPRPSL…HFQQVFAAPQ (454 aa)). Positions 468-970 (QAVLASIWAG…WRRVMEEGKA (503 aa)) are adenylyl transferase.

This sequence belongs to the GlnE family. Requires Mg(2+) as cofactor.

It catalyses the reaction [glutamine synthetase]-O(4)-(5'-adenylyl)-L-tyrosine + phosphate = [glutamine synthetase]-L-tyrosine + ADP. The enzyme catalyses [glutamine synthetase]-L-tyrosine + ATP = [glutamine synthetase]-O(4)-(5'-adenylyl)-L-tyrosine + diphosphate. Functionally, involved in the regulation of glutamine synthetase GlnA, a key enzyme in the process to assimilate ammonia. When cellular nitrogen levels are high, the C-terminal adenylyl transferase (AT) inactivates GlnA by covalent transfer of an adenylyl group from ATP to specific tyrosine residue of GlnA, thus reducing its activity. Conversely, when nitrogen levels are low, the N-terminal adenylyl removase (AR) activates GlnA by removing the adenylyl group by phosphorolysis, increasing its activity. The regulatory region of GlnE binds the signal transduction protein PII (GlnB) which indicates the nitrogen status of the cell. This Thioalkalivibrio sulfidiphilus (strain HL-EbGR7) protein is Bifunctional glutamine synthetase adenylyltransferase/adenylyl-removing enzyme.